The chain runs to 515 residues: Na(+)/H(+) antiporter NhaB (515 aa).

Helical transmembrane passes span 23 to 43, 45 to 65, 96 to 116, 136 to 156, 204 to 224, 245 to 265, 305 to 325, 349 to 369, 393 to 413, 449 to 469, and 480 to 500; these read LAII…NPFV, GWLL…CYPL, VVLL…LLLF, CLAS…AVVI, LMMH…VGEP, APIT…VEHF, ALIG…VGLI, FEEA…VAVI, LFYL…VGTV, ATPN…SPLI, and ALPY…FLLI.

This sequence belongs to the NhaB Na(+)/H(+) (TC 2.A.34) antiporter family.

It localises to the cell inner membrane. The enzyme catalyses 2 Na(+)(in) + 3 H(+)(out) = 2 Na(+)(out) + 3 H(+)(in). Na(+)/H(+) antiporter that extrudes sodium in exchange for external protons. This is Na(+)/H(+) antiporter NhaB from Photorhabdus laumondii subsp. laumondii (strain DSM 15139 / CIP 105565 / TT01) (Photorhabdus luminescens subsp. laumondii).